A 354-amino-acid chain; its full sequence is Rhodopsin (354 aa).

Residues 1 to 36 are Extracellular-facing; that stretch reads MNGTEGPYFYIPMVNTTGIVRSPYEYPQYYLVNPAA. 2 N-linked (GlcNAc...) asparagine glycosylation sites follow: N2 and N15. Residues 37 to 61 form a helical membrane-spanning segment; sequence YAALGAYMFFLILLGFPINFLTLYV. Topologically, residues 62–73 are cytoplasmic; sequence TLEHKKLRTPLN. Residues 74 to 96 form a helical membrane-spanning segment; it reads YILLNLAVADLFMVFGGFTTTMY. The Extracellular segment spans residues 97–110; sequence TSMHGYFVLGRLGC. A disulfide bond links C110 and C187. Residues 111-133 form a helical membrane-spanning segment; the sequence is NLEGFFATLGGEIGLWSLVVLAI. A 'Ionic lock' involved in activated form stabilization motif is present at residues 134–136; it reads ERW. The Cytoplasmic segment spans residues 134-152; the sequence is ERWVVVCKPISNFRFGENH. Residues 153 to 173 form a helical membrane-spanning segment; the sequence is AIMGLAFTWIMACACAVPPLV. Residues 174-202 lie on the Extracellular side of the membrane; the sequence is GWSRYIPEGMQCSCGVDYYTRAEGFNNES. N200 carries an N-linked (GlcNAc...) asparagine glycan. Residues 203–224 traverse the membrane as a helical segment; the sequence is FVVYMFTCHFCIPLTIIGFCYG. Over 225-252 the chain is Cytoplasmic; that stretch reads RLLCAVKEAAAAQQESETTQRAEREVTR. Residues 253–274 form a helical membrane-spanning segment; that stretch reads MVILMVVGFLVCWLPYASVAWY. The Extracellular portion of the chain corresponds to 275–286; that stretch reads IFSNQGSQFGPL. The chain crosses the membrane as a helical span at residues 287–308; it reads FMTIPAFFAKSSSVYNPMIYIC. Position 296 is an N6-(retinylidene)lysine (K296). Over 309–354 the chain is Cytoplasmic; it reads MNKQFRHCMITTLCCGKNPFEEEEGASTTASKTEASSVSSSSVSPA. Residues C322 and C323 are each lipidated (S-palmitoyl cysteine). Residues 333 to 354 are disordered; that stretch reads GASTTASKTEASSVSSSSVSPA. Low complexity predominate over residues 334–354; that stretch reads ASTTASKTEASSVSSSSVSPA.

It belongs to the G-protein coupled receptor 1 family. Opsin subfamily. In terms of processing, phosphorylated on some or all of the serine and threonine residues present in the C-terminal region. Contains one covalently linked retinal chromophore.

Its subcellular location is the membrane. It localises to the cell projection. The protein localises to the cilium. It is found in the photoreceptor outer segment. Its function is as follows. Photoreceptor required for image-forming vision at low light intensity. While most salt water fish species use retinal as chromophore, most freshwater fish use 3-dehydroretinal, or a mixture of retinal and 3-dehydroretinal. Light-induced isomerization of 11-cis to all-trans retinal triggers a conformational change that activates signaling via G-proteins. Subsequent receptor phosphorylation mediates displacement of the bound G-protein alpha subunit by arrestin and terminates signaling. In Salaria pavo (Peacock blenny), this protein is Rhodopsin (rho).